The chain runs to 562 residues: Non-homologous end joining factor IFFO1 (562 aa).

The interval 65–116 is LMNA binding; it reads ALRNDLGSNINVLKTLNLRFRCFLAKVHELERRNRLLEKQLQQALEEGKQGR. Positions 73-529 constitute an IF rod domain; sequence NINVLKTLNL…RLITQSGDRK (457 aa). The stretch at 85–117 forms a coiled coil; it reads RCFLAKVHELERRNRLLEKQLQQALEEGKQGRR. The disordered stretch occupies residues 154–187; it reads RVLGSPSRSPAGPLASSAACHTSSSTSTSTAFSS. Low complexity predominate over residues 168 to 187; the sequence is ASSAACHTSSSTSTSTAFSS. The stretch at 237–301 forms a coiled coil; it reads EIRALYNVLA…MKVEQLKAEL (65 aa). The tract at residues 364 to 401 is disordered; the sequence is MGGRKRERKAAVEEDTSLSESDGPRQPEGAEEESTALS. Positions 453 to 528 are XCCR4 binding. Required for localization to the double-strand breaks (DSBs); sequence EQEDSLEKVI…RRLITQSGDR (76 aa). The stretch at 458–504 forms a coiled coil; sequence LEKVIKDTESLFKTREKEYQETIDQIELELATAKNDMNRHLHEYMEM. The segment at 523–562 is disordered; the sequence is TQSGDRKSPAFTAVPLSDPPPPPSETEDSDRDVSSDSSMR. Over residues 553-562 the composition is skewed to basic and acidic residues; that stretch reads RDVSSDSSMR.

It belongs to the intermediate filament family. Forms a heterotetramer with XRCC4. The interaction with XRCC4 is direct, involves LIG4-free XRCC4 and leads to relocalization of IFFO1 at the double-strand break (DSB) sites. Interacts with LMNA; the interaction forms an interior nucleoskeleton and the recruitment to DNA double-strand breaks.

It is found in the nucleus. The protein localises to the nucleoplasm. Its subcellular location is the nucleus inner membrane. The protein resides in the nucleus matrix. Nuclear matrix protein involved in the immobilization of broken DNA ends and the suppression of chromosome translocation during DNA double-strand breaks (DSBs). Interacts with the nuclear lamina component LMNA, resulting in the formation of a nucleoskeleton that will relocalize to the DSB sites in a XRCC4-dependent manner and promote the immobilization of the broken ends, thereby preventing chromosome translocation. Acts as a scaffold that allows the DNA repair protein XRCC4 and LMNA to assemble into a complex at the DSB sites. The polypeptide is Non-homologous end joining factor IFFO1 (Mus musculus (Mouse)).